A 194-amino-acid chain; its full sequence is HTH-type transcriptional regulator BetI (194 aa).

The 61-residue stretch at 8–68 folds into the HTH tetR-type domain; it reads EIRRAQLIDA…ATMRHVLRDL (61 aa). The segment at residues 31-50 is a DNA-binding region (H-T-H motif); that stretch reads TLASVAQRANISTGIVSHYF.

It functions in the pathway amine and polyamine biosynthesis; betaine biosynthesis via choline pathway [regulation]. In terms of biological role, repressor involved in the biosynthesis of the osmoprotectant glycine betaine. It represses transcription of the choline transporter BetT and the genes of BetAB involved in the synthesis of glycine betaine. The protein is HTH-type transcriptional regulator BetI of Burkholderia ambifaria (strain MC40-6).